Reading from the N-terminus, the 292-residue chain is Protein sarah (292 aa).

A compositionally biased stretch (low complexity) spans 1–51 (MSDAAKSNNNASADAPDPTTPDATGEADAANAATPTTPRGNHNNNNSANGR). Positions 1 to 111 (MSDAAKSNNN…TEPEVDADSF (111 aa)) are disordered. Ser67, Ser72, and Ser100 each carry phosphoserine. Over residues 98–111 (VDSDTEPEVDADSF) the composition is skewed to acidic residues. Phosphothreonine is present on residues Thr102 and Thr196. Phosphoserine occurs at positions 215 and 219. Thr246 is subject to Phosphothreonine.

Belongs to the RCAN family. As to quaternary structure, interacts with Pp2B-14D, CanA-14F and CanB2. In terms of processing, phosphorylation at Ser-215 and Ser-219 is essential for calcineurin activation and completion of female meiosis. Sgg is required for phosphorylation of Ser-215 in activated eggs. Ser-100, Thr-102 and Ser-219 are highly phosphorylated in both ovaries and activated eggs; however, phosphorylation at Ser-100 or Thr-102 is not required for sra function in completion of female meiosis. Expressed in central nervous system of the third instar larvae, with a relatively intense signal in the brain and weak signals in the ventral ganglion. Relatively low, but ubiquitous expression level is observed in leg and wing imaginal disks, no signal is detected in the eye-antennal disks. Expressed in all neurons in the adult brain.

Required for elongation of meiosis I spindle. Critical for ovulation, meiotic progression in oocytes and female courtship behavior, including their postmating changes. Regulates female meiosis by controlling calcineurin activity in the germline. Has a role in calcium signaling during egg activation; bcd mRNA polyadenylation and translation in the oocyte. The sequence is that of Protein sarah (sra) from Drosophila melanogaster (Fruit fly).